A 994-amino-acid polypeptide reads, in one-letter code: Chloride channel protein E (994 aa).

The segment at 1 to 33 (MTRKENEESESLSSSSSPIDNSNNNNNNNNHSI) is disordered. The Cytoplasmic segment spans residues 1–163 (MTRKENEESE…HWLGKERIST (163 aa)). Residues 11 to 32 (SLSSSSSPIDNSNNNNNNNNHS) are compositionally biased toward low complexity. 11 consecutive transmembrane segments (helical) span residues 164 to 184 (LLFIPTLGILIALMGILCDFL), 227 to 247 (IVFVGYSVFFALISVCCISFI), 271 to 291 (VLGFKTLVSKIVGMVCASAAG), 300 to 320 (FMHASAIISQMLMNLKVFGAI), 334 to 354 (ALTSGVVANFGAPIGGLLFAI), 362 to 382 (VMGNLWKGFLCATTTAIIFFL), 410 to 430 (LITFVGIGIITGLIGAFFVFI), 449 to 469 (IILVLVVSLFSAIITYSAGPL), 505 to 525 (LLVFIVVKLILTAFNIVLPIP), 527 to 547 (GAITPFIVTGAALGRLFGEIL), and 554 to 574 (QAIEPAGFAAIASAGLVSGTI). The CBS 1 domain occupies 644 to 705 (MKKNINYLSM…LDIHIENIEQ (62 aa)). Disordered stretches follow at residues 715 to 767 (FVNN…NSEN), 802 to 822 (IKPNQDESSSNSNGGSSSDFE), and 846 to 872 (DENSSLGEKPIIEHDDEDDDEEEGDGI). Composition is skewed to low complexity over residues 717–764 (NNNN…NSNN) and 809–822 (SSSNSNGGSSSDFE). Residues 859–870 (HDDEDDDEEEGD) are compositionally biased toward acidic residues. The CBS 2 domain occupies 944–994 (MDLAPSQVPDLTPLNKVFHLFTMLGLGFTYVTSLGKLVGVITKNSLMEQDL).

It belongs to the chloride channel (TC 2.A.49) family.

Its subcellular location is the membrane. Its function is as follows. Voltage-gated chloride channel. Chloride channels may have several functions including the regulation of cell volume, membrane potential stabilization and signal transduction. This chain is Chloride channel protein E (clcE), found in Dictyostelium discoideum (Social amoeba).